The chain runs to 246 residues: MADS-box protein EJ2 (246 aa).

Residues 1 to 61 (MGRGRVELKR…GKLYEFCSTS (61 aa)) form the MADS-box domain. The 91-residue stretch at 87–177 (TQNNYHEYLR…RRKLEESVAG (91 aa)) folds into the K-box domain.

Its subcellular location is the nucleus. MADS-box transcription factor that acts redundantly with J2 to control meristem maturation and inflorescence architecture. The polypeptide is MADS-box protein EJ2 (Solanum lycopersicum (Tomato)).